The sequence spans 304 residues: Ribosomal protein L11 methyltransferase (304 aa).

S-adenosyl-L-methionine is bound by residues threonine 156, glycine 177, aspartate 199, and asparagine 240.

Belongs to the methyltransferase superfamily. PrmA family.

The protein localises to the cytoplasm. The enzyme catalyses L-lysyl-[protein] + 3 S-adenosyl-L-methionine = N(6),N(6),N(6)-trimethyl-L-lysyl-[protein] + 3 S-adenosyl-L-homocysteine + 3 H(+). Functionally, methylates ribosomal protein L11. The polypeptide is Ribosomal protein L11 methyltransferase (Symbiobacterium thermophilum (strain DSM 24528 / JCM 14929 / IAM 14863 / T)).